The primary structure comprises 107 residues: MTEFTLSDLEKIVATRARAAPEESWTAKLVAAGQKKAAKKLGEEAVETVIAAIGDDRKNLVDESADLLYHLMVVLNIAAIPLQDVMSELARRTSQSGLQEKANRQNP.

The protein belongs to the PRA-PH family.

It localises to the cytoplasm. The catalysed reaction is 1-(5-phospho-beta-D-ribosyl)-ATP + H2O = 1-(5-phospho-beta-D-ribosyl)-5'-AMP + diphosphate + H(+). The protein operates within amino-acid biosynthesis; L-histidine biosynthesis; L-histidine from 5-phospho-alpha-D-ribose 1-diphosphate: step 2/9. This chain is Phosphoribosyl-ATP pyrophosphatase, found in Sinorhizobium medicae (strain WSM419) (Ensifer medicae).